The chain runs to 185 residues: Elongation factor P (185 aa).

This sequence belongs to the elongation factor P family.

It localises to the cytoplasm. It functions in the pathway protein biosynthesis; polypeptide chain elongation. Involved in peptide bond synthesis. Stimulates efficient translation and peptide-bond synthesis on native or reconstituted 70S ribosomes in vitro. Probably functions indirectly by altering the affinity of the ribosome for aminoacyl-tRNA, thus increasing their reactivity as acceptors for peptidyl transferase. The polypeptide is Elongation factor P (Nitrosomonas europaea (strain ATCC 19718 / CIP 103999 / KCTC 2705 / NBRC 14298)).